The chain runs to 319 residues: 4-hydroxy-3-methylbut-2-enyl diphosphate reductase (319 aa).

Cysteine 17 serves as a coordination point for [4Fe-4S] cluster. Residues histidine 46 and histidine 79 each contribute to the (2E)-4-hydroxy-3-methylbut-2-enyl diphosphate site. Residues histidine 46 and histidine 79 each coordinate dimethylallyl diphosphate. Positions 46 and 79 each coordinate isopentenyl diphosphate. Cysteine 101 is a binding site for [4Fe-4S] cluster. Histidine 129 serves as a coordination point for (2E)-4-hydroxy-3-methylbut-2-enyl diphosphate. Histidine 129 is a binding site for dimethylallyl diphosphate. Histidine 129 serves as a coordination point for isopentenyl diphosphate. The active-site Proton donor is the glutamate 131. Residue threonine 170 participates in (2E)-4-hydroxy-3-methylbut-2-enyl diphosphate binding. Position 200 (cysteine 200) interacts with [4Fe-4S] cluster. (2E)-4-hydroxy-3-methylbut-2-enyl diphosphate contacts are provided by serine 228, serine 229, asparagine 230, and serine 273. Residues serine 228, serine 229, asparagine 230, and serine 273 each coordinate dimethylallyl diphosphate. Isopentenyl diphosphate contacts are provided by serine 228, serine 229, asparagine 230, and serine 273.

It belongs to the IspH family. The cofactor is [4Fe-4S] cluster.

The catalysed reaction is isopentenyl diphosphate + 2 oxidized [2Fe-2S]-[ferredoxin] + H2O = (2E)-4-hydroxy-3-methylbut-2-enyl diphosphate + 2 reduced [2Fe-2S]-[ferredoxin] + 2 H(+). The enzyme catalyses dimethylallyl diphosphate + 2 oxidized [2Fe-2S]-[ferredoxin] + H2O = (2E)-4-hydroxy-3-methylbut-2-enyl diphosphate + 2 reduced [2Fe-2S]-[ferredoxin] + 2 H(+). Its pathway is isoprenoid biosynthesis; dimethylallyl diphosphate biosynthesis; dimethylallyl diphosphate from (2E)-4-hydroxy-3-methylbutenyl diphosphate: step 1/1. It participates in isoprenoid biosynthesis; isopentenyl diphosphate biosynthesis via DXP pathway; isopentenyl diphosphate from 1-deoxy-D-xylulose 5-phosphate: step 6/6. Its function is as follows. Catalyzes the conversion of 1-hydroxy-2-methyl-2-(E)-butenyl 4-diphosphate (HMBPP) into a mixture of isopentenyl diphosphate (IPP) and dimethylallyl diphosphate (DMAPP). Acts in the terminal step of the DOXP/MEP pathway for isoprenoid precursor biosynthesis. The sequence is that of 4-hydroxy-3-methylbut-2-enyl diphosphate reductase from Cereibacter sphaeroides (strain ATCC 17029 / ATH 2.4.9) (Rhodobacter sphaeroides).